The chain runs to 430 residues: Histidine--tRNA ligase (430 aa).

It belongs to the class-II aminoacyl-tRNA synthetase family.

It localises to the cytoplasm. It carries out the reaction tRNA(His) + L-histidine + ATP = L-histidyl-tRNA(His) + AMP + diphosphate + H(+). The chain is Histidine--tRNA ligase from Metallosphaera sedula (strain ATCC 51363 / DSM 5348 / JCM 9185 / NBRC 15509 / TH2).